A 272-amino-acid chain; its full sequence is Formamidopyrimidine-DNA glycosylase (272 aa).

Pro2 serves as the catalytic Schiff-base intermediate with DNA. Catalysis depends on Glu3, which acts as the Proton donor. Lys58 acts as the Proton donor; for beta-elimination activity in catalysis. The DNA site is built by His91, Arg111, and Arg153. The FPG-type zinc-finger motif lies at 238–272 (AVYGRANKACVICSKPLKEIRQAQRSTVFCINCQS). Catalysis depends on Arg262, which acts as the Proton donor; for delta-elimination activity.

It belongs to the FPG family. In terms of assembly, monomer. It depends on Zn(2+) as a cofactor.

The catalysed reaction is Hydrolysis of DNA containing ring-opened 7-methylguanine residues, releasing 2,6-diamino-4-hydroxy-5-(N-methyl)formamidopyrimidine.. It catalyses the reaction 2'-deoxyribonucleotide-(2'-deoxyribose 5'-phosphate)-2'-deoxyribonucleotide-DNA = a 3'-end 2'-deoxyribonucleotide-(2,3-dehydro-2,3-deoxyribose 5'-phosphate)-DNA + a 5'-end 5'-phospho-2'-deoxyribonucleoside-DNA + H(+). Its function is as follows. Involved in base excision repair of DNA damaged by oxidation or by mutagenic agents. Acts as a DNA glycosylase that recognizes and removes damaged bases. Has a preference for oxidized purines, such as 7,8-dihydro-8-oxoguanine (8-oxoG). Has AP (apurinic/apyrimidinic) lyase activity and introduces nicks in the DNA strand. Cleaves the DNA backbone by beta-delta elimination to generate a single-strand break at the site of the removed base with both 3'- and 5'-phosphates. This chain is Formamidopyrimidine-DNA glycosylase, found in Marinomonas sp. (strain MWYL1).